The following is a 344-amino-acid chain: Exopolyphosphatase 1 (344 aa).

The segment at 319 to 344 (VHTSVRAVGGQPADRNAANRSRGSKP) is disordered.

This sequence belongs to the GppA/Ppx family. In terms of assembly, homodimer.

The catalysed reaction is [phosphate](n) + H2O = [phosphate](n-1) + phosphate + H(+). In terms of biological role, degradation of inorganic polyphosphates (polyP). Releases orthophosphate processively from the ends of the polyP chain. The polypeptide is Exopolyphosphatase 1 (Mycobacterium bovis (strain ATCC BAA-935 / AF2122/97)).